The primary structure comprises 842 residues: Serine/threonine-protein phosphatase 4 regulatory subunit 3 (842 aa).

As to quaternary structure, regulatory subunit 3 (R3) of the histone H2A phosphatase complex (HTP-C) consisting of PPH3, PSY2 and PSY4.

It localises to the nucleus. Core regulatory subunit of the histone H2A phosphatase complex, which dephosphorylates H2AS128ph (gamma-H2A) that has been displaced from sites of DNA lesions in the double-stranded DNA break repair process. Dephosphorylation is necessary for efficient recovery from the DNA damage checkpoint. This Candida glabrata (strain ATCC 2001 / BCRC 20586 / JCM 3761 / NBRC 0622 / NRRL Y-65 / CBS 138) (Yeast) protein is Serine/threonine-protein phosphatase 4 regulatory subunit 3 (PSY2).